The sequence spans 339 residues: tRNA N6-adenosine threonylcarbamoyltransferase (339 aa).

Fe cation-binding residues include His111 and His115. Residues 134 to 138, Asp167, Gly180, and Asn270 each bind substrate; that span reads LVSGG. Asp298 serves as a coordination point for Fe cation.

It belongs to the KAE1 / TsaD family. The cofactor is Fe(2+).

The protein resides in the cytoplasm. The catalysed reaction is L-threonylcarbamoyladenylate + adenosine(37) in tRNA = N(6)-L-threonylcarbamoyladenosine(37) in tRNA + AMP + H(+). In terms of biological role, required for the formation of a threonylcarbamoyl group on adenosine at position 37 (t(6)A37) in tRNAs that read codons beginning with adenine. Is involved in the transfer of the threonylcarbamoyl moiety of threonylcarbamoyl-AMP (TC-AMP) to the N6 group of A37, together with TsaE and TsaB. TsaD likely plays a direct catalytic role in this reaction. The chain is tRNA N6-adenosine threonylcarbamoyltransferase from Alkalilimnicola ehrlichii (strain ATCC BAA-1101 / DSM 17681 / MLHE-1).